The chain runs to 370 residues: Platelet-derived growth factor D (370 aa).

Positions 1 to 23 (MHRLILVSILVCANFCCYRDTFA) are cleaved as a signal peptide. The CUB domain maps to 52 to 170 (RDENIRVTGT…PGFKIYYSFV (119 aa)). The cysteines at positions 109 and 131 are disulfide-linked. N-linked (GlcNAc...) asparagine glycosylation occurs at asparagine 276. 2 cysteine pairs are disulfide-bonded: cysteine 302-cysteine 360 and cysteine 306-cysteine 362.

The protein belongs to the PDGF/VEGF growth factor family. Homodimer; disulfide-linked. Interacts with PDGFRB homodimers, and with heterodimers formed by PDGFRA and PDGFRB. Post-translationally, activated by proteolytic cleavage. Proteolytic removal of the N-terminal CUB domain releasing the core domain is necessary for unmasking the receptor-binding epitopes of the core domain. Cleavage after Arg-247 or Arg-249 by urokinase plasminogen activator gives rise to the active form. As to expression, widely expressed. Expressed at high levels in the kidney, adrenal glands, eye and CNS. In the kidney the localization is confined to arterial and arteriolar vascular smooth muscle cells and is also detected at low levels in the glomeruli In the eye in the anterior segment it is localized to the iris and ciliary body. In the retina localizes intensely to the outer plexiform layer, which contains photoreceptor axons and the synaptic layer between photoreceptors and second order neurons. In the spinal cord, prominently expressed in the motorneurons.

Its subcellular location is the secreted. Functionally, growth factor that plays an essential role in the regulation of embryonic development, cell proliferation, cell migration, survival and chemotaxis. Potent mitogen for cells of mesenchymal origin. Plays an important role in wound healing. Induces macrophage recruitment, increased interstitial pressure, and blood vessel maturation during angiogenesis. May play an important role in control of lens epithelial cell proliferation. Can initiate events that lead to a mesangial proliferative glomerulonephritis, including influx of monocytes and macrophages and production of extracellular matrix. This Rattus norvegicus (Rat) protein is Platelet-derived growth factor D (Pdgfd).